The chain runs to 414 residues: Cyclin-B1-3 (414 aa).

This sequence belongs to the cyclin family. Cyclin AB subfamily. Expressed in roots, stems and flowers.

This chain is Cyclin-B1-3 (CYCB1-3), found in Arabidopsis thaliana (Mouse-ear cress).